A 23-amino-acid chain; its full sequence is Brevinin-1SE (23 aa).

The cysteines at positions 17 and 23 are disulfide-linked.

In terms of tissue distribution, expressed by the skin glands.

The protein resides in the secreted. Mast cell degranulating peptide. Causes histamine release from rat peritoneal mast cells in vitro. Has antibacterial activity against the Gram-negative bacterium E.coli K12 and Gram-positive bacterium M.luteus NCT C2665. This Lithobates sevosus (Dusky gopher frog) protein is Brevinin-1SE.